A 568-amino-acid chain; its full sequence is Phosphoprotein (568 aa).

2 disordered regions span residues 1–23 (MDQD…GGRE) and 38–320 (SEPT…GIGE). A compositionally biased stretch (basic and acidic residues) spans 7-20 (ILKEDSEVEREAPG). The tract at residues 33 to 41 (DAVLSSEPT) is N0 binding. Over residues 50 to 59 (LHNTINTPQG) the composition is skewed to polar residues. Phosphoserine; by host is present on S68. Residues 83-101 (RSGEESRVSGRTSKPEAEA) show a composition bias toward basic and acidic residues. A Phosphoserine; by host modification is found at S125. A compositionally biased stretch (basic and acidic residues) spans 150 to 168 (GIEDENREMAAHPDKRGED). Residues 191–206 (ASNNGRSMEPGSSHSA) are compositionally biased toward polar residues. Residues S192, S249, S257, and S260 each carry the phosphoserine; by host modification. Multimerization regions lie at residues 344-411 (FESS…KRFS) and 362-432 (ANYA…HIIT). The tract at residues 345 to 412 (ESSRDASYVF…FRDIYKRFSE (68 aa)) is bipartite nucleocapsid binding domain 1. A coiled-coil region spans residues 364–429 (YAEMTFNVCG…LLMSNLSTLH (66 aa)). L protein binding stretches follow at residues 412–445 (EYQK…DSLT) and 413–445 (YQKE…DSLT). A phosphoserine; by host mark is found at S447 and S449. The tract at residues 479–568 (DLIREDEFRD…VEEDIESLTN (90 aa)) is bipartite nucleocapsid binding domain 2. An interaction with the nucleocapsid (N-RNA) region spans residues 479-568 (DLIREDEFRD…VEEDIESLTN (90 aa)). The interval 495–516 (YQERDTEPRASNASRLLPSKEK) is disordered. The interval 547-566 (KTDQEVKAVMELVEEDIESL) is formation of N-RNA complex involved in transcription and replication.

This sequence belongs to the respirovirus P protein family. Homotetramer. Interacts (via multimerization domain) with polymerase L; this interaction forms the polymerase complex. Interacts (via N-terminus) with N0; this interaction allows P to chaperon N0 before encapsidation and form the N-P complex. Interacts (via C-terminus) with N-RNA template; this interaction positions the polymerase on the template. Phosphorylated by PKC/PRKCZ, and other unknown kinases. Phosphorylation is necessary for viral transcription and replication. The N-terminus contains the majority of phosphorylated sites. Ser-249 is the major site of phosphorylation, but is not necessary for most functions.

The protein resides in the host cytoplasm. In terms of biological role, essential cofactor of the RNA polymerase L that plays a central role in the transcription and replication by forming the polymerase complex with RNA polymerase L and recruiting L to the genomic N-RNA template for RNA synthesis. Also plays a central role in the encapsidation of nascent RNA chains by forming the encapsidation complex with the nucleocapsid protein N (N-P complex). Acts as a chaperone for newly synthesized free N protein, so-called N0, allowing encapsidation of nascent RNA chains during replication. The nucleoprotein protein N prevents excessive phosphorylation of P, which leads to down-regulation of viral transcription/ replication. Participates, together with N, in the formation of viral factories (viroplasms), which are large inclusions in the host cytoplasm where replication takes place. Recruits host PI4KB and remodel the host endoplasmic reticulum membrane to form viral replication factories. The sequence is that of Phosphoprotein (P/V/C) from Sendai virus (strain Fushimi) (SeV).